The sequence spans 254 residues: Endolysin B (254 aa).

Active-site residues include serine 82, aspartate 166, and histidine 240.

The protein belongs to the L5likevirus endolysin B protein family.

Functionally, endolysin that degrades the junction between mycolic acid and peptidoglycans in the host cell wall and participates with the holin protein in the sequential events which lead to the programmed host cell lysis releasing the mature viral particles. Once the holin has permeabilized the host cell membrane, the endolysin can reach the periplasm and break down the mycolic acid-rich outer membrane. Cleaves the ester linkage joining the mycolic acid-rich outer membrane to arabinogalactan, releasing free mycolic acids. This is Endolysin B (12) from Mycobacterium phage D29 (Mycobacteriophage D29).